We begin with the raw amino-acid sequence, 331 residues long: DNA-directed RNA polymerase subunit alpha (331 aa).

Residues 1 to 246 form an alpha N-terminal domain (alpha-NTD) region; that stretch reads MMQTSRTLHN…GLFSPLQEVS (246 aa). The alpha C-terminal domain (alpha-CTD) stretch occupies residues 256–331; the sequence is AEDNQKNQIP…LTLPRERSKT (76 aa).

Belongs to the RNA polymerase alpha chain family. In cyanobacteria the RNAP catalytic core is composed of 2 alpha, 1 beta, 1 beta', 1 gamma and 1 omega subunit. When a sigma factor is associated with the core the holoenzyme is formed, which can initiate transcription.

It catalyses the reaction RNA(n) + a ribonucleoside 5'-triphosphate = RNA(n+1) + diphosphate. In terms of biological role, DNA-dependent RNA polymerase catalyzes the transcription of DNA into RNA using the four ribonucleoside triphosphates as substrates. This is DNA-directed RNA polymerase subunit alpha from Synechococcus sp. (strain JA-3-3Ab) (Cyanobacteria bacterium Yellowstone A-Prime).